A 76-amino-acid polypeptide reads, in one-letter code: NADH-ubiquinone oxidoreductase chain 4L (76 aa).

3 helical membrane-spanning segments follow: residues 1-21 (MTPV…GLAF), 29-49 (ALLC…LWAL), and 56-76 (YSVA…AGLA).

The protein belongs to the complex I subunit 4L family.

It is found in the mitochondrion membrane. The catalysed reaction is a ubiquinone + NADH + 5 H(+)(in) = a ubiquinol + NAD(+) + 4 H(+)(out). Its function is as follows. Core subunit of the mitochondrial membrane respiratory chain NADH dehydrogenase (Complex I) which catalyzes electron transfer from NADH through the respiratory chain, using ubiquinone as an electron acceptor. Part of the enzyme membrane arm which is embedded in the lipid bilayer and involved in proton translocation. The polypeptide is NADH-ubiquinone oxidoreductase chain 4L (MT-ND4L) (Oncorhynchus masou (Cherry salmon)).